We begin with the raw amino-acid sequence, 356 residues long: MTTFHSLTVAKVESETRDAVTITFAVPQPLQEAYRFRPGQHLTLKASFDGEELRRCYSICRSYLPGEISVAVKAIEGGRFSRYAREHIRQGMTLEVMVPQGHFGYQPQAERQGRYLAIAAGSGITPMLAIIATTLQTEPESQFTLIYGNRTSQSMMFRQALADLKDKYPQRLQLLCIFSQETLDSDLLHGRIDGEKLQSLGASLINFRLYDEAFICGPAAMMDDAETALKALGMPDKTIHLERFNTPGTRVKRSVNVQSDGQKVTVRQDGRDREIVLNADDESILDAALRQGADLPYACKGGVCATCKCKVLRGKVAMETNYSLEPDELAAGYVLSCQALPLTSDVVVDFDAKGMA.

Positions 2 to 106 (TTFHSLTVAK…MVPQGHFGYQ (105 aa)) constitute an FAD-binding FR-type domain. The segment at 112-228 (QGRYLAIAAG…AAMMDDAETA (117 aa)) is oxidoreductase. Positions 262–354 (QKVTVRQDGR…DVVVDFDAKG (93 aa)) constitute a 2Fe-2S ferredoxin-type domain. The [2Fe-2S] cluster site is built by cysteine 299, cysteine 304, cysteine 307, and cysteine 337.

In the N-terminal section; belongs to the FAD-binding oxidoreductase type 6 family. It depends on [2Fe-2S] cluster as a cofactor. FAD is required as a cofactor.

It participates in aromatic compound metabolism; phenylacetate degradation. Functionally, component of 1,2-phenylacetyl-CoA epoxidase multicomponent enzyme system which catalyzes the reduction of phenylacetyl-CoA (PA-CoA) to form 1,2-epoxyphenylacetyl-CoA. The subunit E is a reductase with a preference for NADPH and FAD, capable of reducing cytochrome c. This is 1,2-phenylacetyl-CoA epoxidase, subunit E (paaE) from Escherichia coli (strain K12).